Here is a 338-residue protein sequence, read N- to C-terminus: Aspartate carbamoyltransferase catalytic subunit (338 aa).

Carbamoyl phosphate-binding residues include arginine 59 and threonine 60. Residue lysine 87 coordinates L-aspartate. Residues arginine 109, histidine 142, and glutamine 145 each coordinate carbamoyl phosphate. 2 residues coordinate L-aspartate: arginine 182 and arginine 253. Positions 294 and 295 each coordinate carbamoyl phosphate.

Belongs to the aspartate/ornithine carbamoyltransferase superfamily. ATCase family. In terms of assembly, heterododecamer (2C3:3R2) of six catalytic PyrB chains organized as two trimers (C3), and six regulatory PyrI chains organized as three dimers (R2).

It catalyses the reaction carbamoyl phosphate + L-aspartate = N-carbamoyl-L-aspartate + phosphate + H(+). It functions in the pathway pyrimidine metabolism; UMP biosynthesis via de novo pathway; (S)-dihydroorotate from bicarbonate: step 2/3. Functionally, catalyzes the condensation of carbamoyl phosphate and aspartate to form carbamoyl aspartate and inorganic phosphate, the committed step in the de novo pyrimidine nucleotide biosynthesis pathway. The protein is Aspartate carbamoyltransferase catalytic subunit of Prochlorococcus marinus (strain SARG / CCMP1375 / SS120).